Consider the following 61-residue polypeptide: Transmembrane protein 300R (61 aa).

The next 2 helical transmembrane spans lie at 5–25 and 35–55; these read FLDLYMILSVLAGVIGIFYLT and SLSYYMTLSVVTGILALIYLQ.

The protein resides in the membrane. The chain is Transmembrane protein 300R from Invertebrate iridescent virus 6 (IIV-6).